We begin with the raw amino-acid sequence, 213 residues long: tRNA (guanine-N(7)-)-methyltransferase (213 aa).

S-adenosyl-L-methionine is bound by residues Glu44, Glu69, Asp96, and Asp118. Residue Asp118 is part of the active site. Substrate is bound by residues Lys122, Asp154, and 191-194 (TEYE).

Belongs to the class I-like SAM-binding methyltransferase superfamily. TrmB family.

The catalysed reaction is guanosine(46) in tRNA + S-adenosyl-L-methionine = N(7)-methylguanosine(46) in tRNA + S-adenosyl-L-homocysteine. Its pathway is tRNA modification; N(7)-methylguanine-tRNA biosynthesis. Functionally, catalyzes the formation of N(7)-methylguanine at position 46 (m7G46) in tRNA. The chain is tRNA (guanine-N(7)-)-methyltransferase from Exiguobacterium sibiricum (strain DSM 17290 / CCUG 55495 / CIP 109462 / JCM 13490 / 255-15).